A 218-amino-acid polypeptide reads, in one-letter code: MEPGFWHDKWQSQQIGFHQSDINPFLVKHWESLKLEGKGKVFVPLCGKSLDMEFLAAQGHEVIGSELSALAVSQFFEAAGAKPQSRTQGEHVHHSAQGVTLIEGDFFTLDEELVAGCSGFYDRAALIAWPAEMRIDYVRKLAALIPAGTPGLLITLDYPQEALIGPPFAVSPNWVEEFVGEYFEVVVLESQDVLADNPRFVKKAVPWLNEAAYLLVRK.

4 residues coordinate S-adenosyl-L-methionine: Trp-10, Leu-45, Glu-66, and Arg-123.

This sequence belongs to the class I-like SAM-binding methyltransferase superfamily. TPMT family.

The protein resides in the cytoplasm. It carries out the reaction S-adenosyl-L-methionine + a thiopurine = S-adenosyl-L-homocysteine + a thiopurine S-methylether.. The polypeptide is Thiopurine S-methyltransferase (Shewanella amazonensis (strain ATCC BAA-1098 / SB2B)).